The sequence spans 61 residues: Small ribosomal subunit protein uS14 (61 aa).

Residues Cys-24, Cys-27, Cys-40, and Cys-43 each coordinate Zn(2+).

It belongs to the universal ribosomal protein uS14 family. Zinc-binding uS14 subfamily. In terms of assembly, part of the 30S ribosomal subunit. Contacts proteins S3 and S10. Zn(2+) serves as cofactor.

Functionally, binds 16S rRNA, required for the assembly of 30S particles and may also be responsible for determining the conformation of the 16S rRNA at the A site. This Nautilia profundicola (strain ATCC BAA-1463 / DSM 18972 / AmH) protein is Small ribosomal subunit protein uS14.